The chain runs to 155 residues: UBA-like domain-containing protein 1 (155 aa).

Residues Lys-81 to Arg-155 are disordered. Over residues Ser-83 to Thr-96 the composition is skewed to low complexity. Over residues Ala-112–Thr-127 the composition is skewed to polar residues. A compositionally biased stretch (low complexity) spans Gln-139 to Arg-155.

Belongs to the UBALD family.

The polypeptide is UBA-like domain-containing protein 1 (ubald1) (Danio rerio (Zebrafish)).